A 358-amino-acid polypeptide reads, in one-letter code: Probable translocation protein Y4yK (358 aa).

This sequence belongs to the FliN/MopA/SpaO family.

Could be involved in the secretion of an unknown factor. This is Probable translocation protein Y4yK from Sinorhizobium fredii (strain NBRC 101917 / NGR234).